A 256-amino-acid polypeptide reads, in one-letter code: 5'-nucleotidase SurE (256 aa).

A divalent metal cation is bound by residues D9, D10, S42, and N99.

This sequence belongs to the SurE nucleotidase family. Requires a divalent metal cation as cofactor.

It is found in the cytoplasm. It catalyses the reaction a ribonucleoside 5'-phosphate + H2O = a ribonucleoside + phosphate. Its function is as follows. Nucleotidase that shows phosphatase activity on nucleoside 5'-monophosphates. In Symbiobacterium thermophilum (strain DSM 24528 / JCM 14929 / IAM 14863 / T), this protein is 5'-nucleotidase SurE.